Reading from the N-terminus, the 606-residue chain is Cryptochrome-1 (606 aa).

A Photolyase/cryptochrome alpha/beta domain is found at Val-3 to Leu-132. Residue Lys-11 forms a Glycyl lysine isopeptide (Lys-Gly) (interchain with G-Cter in ubiquitin) linkage. An LIR 1 motif is present at residues Asn-50–Phe-54. Ser-71 is subject to Phosphoserine; by AMPK. The LIR 2 signature appears at Asp-82–Leu-87. Lys-107 participates in a covalent cross-link: Glycyl lysine isopeptide (Lys-Gly) (interchain with G-Cter in ubiquitin). The LIR 3 signature appears at Lys-151–Leu-156. Lys-159 is covalently cross-linked (Glycyl lysine isopeptide (Lys-Gly) (interchain with G-Cter in ubiquitin)). At Ser-247 the chain carries Phosphoserine; by MAPK. FAD is bound at residue Ser-252. 2 short sequence motifs (LIR) span residues Leu-255–Leu-260 and Asp-271–Val-276. The residue at position 280 (Ser-280) is a Phosphoserine; by AMPK. The short motif at Ser-285–Leu-290 is the LIR 6 element. Position 289 (Gln-289) interacts with FAD. Lys-329 is covalently cross-linked (Glycyl lysine isopeptide (Lys-Gly) (interchain with G-Cter in ubiquitin)). Residues Thr-335–Trp-339 carry the LIR 7 motif. Position 355 (His-355) interacts with FAD. The interval Trp-371 to Met-470 is required for inhibition of CLOCK-BMAL1-mediated transcription. The LIR 8 motif lies at Lys-379–Leu-384. Residue Asp-387–Asp-389 participates in FAD binding. 3 short sequence motifs (LIR) span residues Gly-395 to Leu-400, His-411 to Val-416, and Arg-430 to Val-435. The interval Val-471 to Arg-493 is interaction with TIMELESS. Residue Lys-485 forms a Glycyl lysine isopeptide (Lys-Gly) (interchain with G-Cter in ubiquitin) linkage. 2 short sequence motifs (LIR) span residues Gln-486–Leu-491 and Ser-492–Leu-497. The tract at residues Tyr-559–Asn-606 is disordered. Positions Asp-563–Arg-586 are enriched in polar residues. Residue Lys-585 forms a Glycyl lysine isopeptide (Lys-Gly) (interchain with G-Cter in ubiquitin) linkage. Position 588 is a phosphoserine (Ser-588).

The protein belongs to the DNA photolyase class-1 family. In terms of assembly, component of the circadian core oscillator, which includes the CRY proteins, CLOCK or NPAS2, BMAL1 or BMAL2, CSNK1D and/or CSNK1E, TIMELESS, and the PER proteins. Interacts directly with TIMELESS. Interacts directly with PER1 and PER2; interaction with PER2 inhibits its ubiquitination and vice versa. Interacts with PER3. Interacts with FBXL21. Interacts with FBXL3. Interacts with PPP5C (via TPR repeats). Interacts with CLOCK-BMAL1 independently of PER2 and DNA. Interacts with HDAC1, HDAC2 and SIN3B. Interacts with nuclear receptors AR, NR1D1, NR3C1/GR, RORA and RORC; the interaction with at least NR3C1/GR is ligand dependent. Interacts with PRKDC. Interacts with the G protein subunit alpha GNAS; the interaction may block GPCR-mediated regulation of cAMP concentrations. Interacts with PRMT5. Interacts with EZH2. Interacts with MYBBP1A, DOCK7, HNRNPU, RPL7A, RPL8 and RPS3. Interacts with MAP1LC3B. Interacts with CLOCK. Interacts with BMAL1. Interacts weakly with HDAC3; this interaction is enhanced in the presence of FBXL3. Interacts with TRIM28, KCTD5 and DDB1. Interacts with DTL. Interacts with DDB1-CUL4A complex. Interacts with FOXO1. Interacts with PSMD2 in a KDM8-dependent manner. Interacts with KDM8 in a FBXL3-dependent manner. Interacts with PPARA. Interacts with PPARG in a ligand-dependent manner. Interacts with PPARD (via domain NR LBD) in a ligand-dependent manner. Interacts with NR1I2 (via domain NR LBD) in a ligand-dependent manner. Interacts with NR1I3, VDR and HNF4A. FAD serves as cofactor. Requires (6R)-5,10-methylene-5,6,7,8-tetrahydrofolate as cofactor. Post-translationally, phosphorylation on Ser-247 by MAPK is important for the inhibition of CLOCK-BMAL1-mediated transcriptional activity. Phosphorylation by CSNK1E requires interaction with PER1 or PER2. Phosphorylation at Ser-71 and Ser-280 by AMPK decreases protein stability. Phosphorylation at Ser-588 exhibits a robust circadian rhythm with a peak at CT8, increases protein stability, prevents SCF(FBXL3)-mediated degradation and is antagonized by interaction with PRKDC. In terms of processing, ubiquitinated by the SCF(FBXL3) and SCF(FBXL21) complexes, regulating the balance between degradation and stabilization. The SCF(FBXL3) complex is mainly nuclear and mediates ubiquitination and subsequent degradation of CRY1. In contrast, cytoplasmic SCF(FBXL21) complex-mediated ubiquitination leads to stabilize CRY1 and counteract the activity of the SCF(FBXL3) complex. The SCF(FBXL3) and SCF(FBXL21) complexes probably mediate ubiquitination at different Lys residues. Ubiquitination at Lys-11 and Lys-107 are specifically ubiquitinated by the SCF(FBXL21) complex but not by the SCF(FBXL3) complex. Ubiquitination may be inhibited by PER2. Deubiquitinated by USP7. Undergoes autophagy-mediated degradation in the liver in a time-dependent manner. Autophagic degradation of CRY1 (an inhibitor of gluconeogenesis) occurs during periods of reduced feeding allowing induction of gluconeogenesis and maintenance of blood glucose levels. Expressed in cones, amacrine cells, and retinal ganglion cells of the retina (at protein level). Expressed in all tissues examined including heart, brain, spleen, lung, liver, skeletal muscle, kidney and testis. Higher levels in brain, liver and testis. In the retina, highly expressed in the ganglion cell layer (GCL) and in the inner nuclear layer (INL). Evenly distributed in central and peripheral retina. In the brain, highly expressed in the suprachiasmatic nucleus (SCN). High levels in cerebral cortical layers particularly in the pyramidial cell layer of the hippocampus, the granular cell layer of the dentate gyrus (DG) and the pyramidal cell layer of the piriform cortex (PFC).

It is found in the cytoplasm. The protein resides in the nucleus. With respect to regulation, KL001 (N-[3-(9H-carbazol-9-yl)-2-hydroxypropyl]-N-(2-furanylmethyl)-methanesulfonamide) binds to CRY1 and stabilizes it by inhibiting FBXL3- and ubiquitin-dependent degradation of CRY1 resulting in lengthening of the circadian periods. KL001-mediated CRY1 stabilization can inhibit glucagon-induced gluconeogenesis in primary hepatocytes. Transcriptional repressor which forms a core component of the circadian clock. The circadian clock, an internal time-keeping system, regulates various physiological processes through the generation of approximately 24 hour circadian rhythms in gene expression, which are translated into rhythms in metabolism and behavior. It is derived from the Latin roots 'circa' (about) and 'diem' (day) and acts as an important regulator of a wide array of physiological functions including metabolism, sleep, body temperature, blood pressure, endocrine, immune, cardiovascular, and renal function. Consists of two major components: the central clock, residing in the suprachiasmatic nucleus (SCN) of the brain, and the peripheral clocks that are present in nearly every tissue and organ system. Both the central and peripheral clocks can be reset by environmental cues, also known as Zeitgebers (German for 'timegivers'). The predominant Zeitgeber for the central clock is light, which is sensed by retina and signals directly to the SCN. The central clock entrains the peripheral clocks through neuronal and hormonal signals, body temperature and feeding-related cues, aligning all clocks with the external light/dark cycle. Circadian rhythms allow an organism to achieve temporal homeostasis with its environment at the molecular level by regulating gene expression to create a peak of protein expression once every 24 hours to control when a particular physiological process is most active with respect to the solar day. Transcription and translation of core clock components (CLOCK, NPAS2, BMAL1, BMAL2, PER1, PER2, PER3, CRY1 and CRY2) plays a critical role in rhythm generation, whereas delays imposed by post-translational modifications (PTMs) are important for determining the period (tau) of the rhythms (tau refers to the period of a rhythm and is the length, in time, of one complete cycle). A diurnal rhythm is synchronized with the day/night cycle, while the ultradian and infradian rhythms have a period shorter and longer than 24 hours, respectively. Disruptions in the circadian rhythms contribute to the pathology of cardiovascular diseases, cancer, metabolic syndromes and aging. A transcription/translation feedback loop (TTFL) forms the core of the molecular circadian clock mechanism. Transcription factors, CLOCK or NPAS2 and BMAL1 or BMAL2, form the positive limb of the feedback loop, act in the form of a heterodimer and activate the transcription of core clock genes and clock-controlled genes (involved in key metabolic processes), harboring E-box elements (5'-CACGTG-3') within their promoters. The core clock genes: PER1/2/3 and CRY1/2 which are transcriptional repressors form the negative limb of the feedback loop and interact with the CLOCK|NPAS2-BMAL1|BMAL2 heterodimer inhibiting its activity and thereby negatively regulating their own expression. This heterodimer also activates nuclear receptors NR1D1/2 and RORA/B/G, which form a second feedback loop and which activate and repress BMAL1 transcription, respectively. CRY1 and CRY2 have redundant functions but also differential and selective contributions at least in defining the pace of the SCN circadian clock and its circadian transcriptional outputs. More potent transcriptional repressor in cerebellum and liver than CRY2, though more effective in lengthening the period of the SCN oscillator. On its side, CRY2 seems to play a critical role in tuning SCN circadian period by opposing the action of CRY1. With CRY2, is dispensable for circadian rhythm generation but necessary for the development of intercellular networks for rhythm synchrony. Capable of translocating circadian clock core proteins such as PER proteins to the nucleus. Interacts with CLOCK-BMAL1 independently of PER proteins and is found at CLOCK-BMAL1-bound sites, suggesting that CRY may act as a molecular gatekeeper to maintain CLOCK-BMAL1 in a poised and repressed state until the proper time for transcriptional activation. Represses the CLOCK-BMAL1 induced transcription of BHLHE40/DEC1, ATF4, MTA1, KLF10 and NAMPT. May repress circadian target genes expression in collaboration with HDAC1 and HDAC2 through histone deacetylation. Mediates the clock-control activation of ATR and modulates ATR-mediated DNA damage checkpoint. In liver, mediates circadian regulation of cAMP signaling and gluconeogenesis by binding to membrane-coupled G proteins and blocking glucagon-mediated increases in intracellular cAMP concentrations and CREB1 phosphorylation. Inhibits hepatic gluconeogenesis by decreasing nuclear FOXO1 levels that down-regulates gluconeogenic gene expression. Besides its role in the maintenance of the circadian clock, is also involved in the regulation of other processes. Represses glucocorticoid receptor NR3C1/GR-induced transcriptional activity by binding to glucocorticoid response elements (GREs). Plays a key role in glucose and lipid metabolism modulation, in part, through the transcriptional regulation of genes involved in these pathways, such as LEP or ACSL4. Represses PPARD and its target genes in the skeletal muscle and limits exercise capacity. Plays an essential role in the generation of circadian rhythms in the retina. Represses the transcriptional activity of NR1I2. This is Cryptochrome-1 (Cry1) from Mus musculus (Mouse).